We begin with the raw amino-acid sequence, 89 residues long: Small ribosomal subunit protein uS15 (89 aa).

Belongs to the universal ribosomal protein uS15 family. Part of the 30S ribosomal subunit. Forms a bridge to the 50S subunit in the 70S ribosome, contacting the 23S rRNA.

One of the primary rRNA binding proteins, it binds directly to 16S rRNA where it helps nucleate assembly of the platform of the 30S subunit by binding and bridging several RNA helices of the 16S rRNA. In terms of biological role, forms an intersubunit bridge (bridge B4) with the 23S rRNA of the 50S subunit in the ribosome. This chain is Small ribosomal subunit protein uS15, found in Pseudomonas putida (strain ATCC 700007 / DSM 6899 / JCM 31910 / BCRC 17059 / LMG 24140 / F1).